We begin with the raw amino-acid sequence, 200 residues long: Dipicolinate synthase subunit B (200 aa).

In terms of assembly, dipicolinate synthase likely consists of DpaA and DpaB, since both proteins are required for DPA synthesis.

It carries out the reaction (S)-2,3-dihydrodipicolinate + NADP(+) = dipicolinate + NADPH + H(+). Together with DpaA, catalyzes the conversion of dihydrodipicolinate to dipicolinate (DPA), which constitutes up to 10% of the dry weight of the spore. This Bacillus subtilis (strain 168) protein is Dipicolinate synthase subunit B (dpaB).